Reading from the N-terminus, the 435-residue chain is 3-ketoacyl-CoA thiolase (435 aa).

Residue cysteine 98 is the Acyl-thioester intermediate of the active site. Residues histidine 391 and cysteine 421 each act as proton acceptor in the active site.

This sequence belongs to the thiolase-like superfamily. Thiolase family. Heterotetramer of two alpha chains (FadJ) and two beta chains (FadI).

It is found in the cytoplasm. It catalyses the reaction an acyl-CoA + acetyl-CoA = a 3-oxoacyl-CoA + CoA. Its pathway is lipid metabolism; fatty acid beta-oxidation. In terms of biological role, catalyzes the final step of fatty acid oxidation in which acetyl-CoA is released and the CoA ester of a fatty acid two carbons shorter is formed. This Vibrio cholerae serotype O1 (strain ATCC 39315 / El Tor Inaba N16961) protein is 3-ketoacyl-CoA thiolase.